A 245-amino-acid chain; its full sequence is Small ribosomal subunit protein uS2 (245 aa).

The protein belongs to the universal ribosomal protein uS2 family.

The polypeptide is Small ribosomal subunit protein uS2 (Pseudomonas putida (strain W619)).